Consider the following 1070-residue polypeptide: DNA-directed RNA polymerase subunit beta (1070 aa).

It belongs to the RNA polymerase beta chain family. In plastids the minimal PEP RNA polymerase catalytic core is composed of four subunits: alpha, beta, beta', and beta''. When a (nuclear-encoded) sigma factor is associated with the core the holoenzyme is formed, which can initiate transcription.

It localises to the plastid. The protein localises to the chloroplast. The enzyme catalyses RNA(n) + a ribonucleoside 5'-triphosphate = RNA(n+1) + diphosphate. Functionally, DNA-dependent RNA polymerase catalyzes the transcription of DNA into RNA using the four ribonucleoside triphosphates as substrates. The sequence is that of DNA-directed RNA polymerase subunit beta from Nandina domestica (Heavenly bamboo).